A 201-amino-acid polypeptide reads, in one-letter code: tRNA (guanine-N(7)-)-methyltransferase (201 aa).

The S-adenosyl-L-methionine site is built by E33, E58, D85, and D108. D108 is a catalytic residue. Substrate-binding residues include K112 and D144.

It belongs to the class I-like SAM-binding methyltransferase superfamily. TrmB family.

The catalysed reaction is guanosine(46) in tRNA + S-adenosyl-L-methionine = N(7)-methylguanosine(46) in tRNA + S-adenosyl-L-homocysteine. The protein operates within tRNA modification; N(7)-methylguanine-tRNA biosynthesis. Its function is as follows. Catalyzes the formation of N(7)-methylguanine at position 46 (m7G46) in tRNA. In Anaeromyxobacter dehalogenans (strain 2CP-C), this protein is tRNA (guanine-N(7)-)-methyltransferase.